Reading from the N-terminus, the 332-residue chain is Glycine betaine-binding periplasmic protein OusX (332 aa).

The first 21 residues, 1 to 21 (MRNISMATLALTTVLSTGLFA), serve as a signal peptide directing secretion.

As to quaternary structure, the complex is composed of two ATP-binding proteins (OusV), two transmembrane proteins (OusW) and a solute-binding protein (OusX).

Its subcellular location is the periplasm. Functionally, part of the OusB ABC transporter complex involved in glycine betaine and choline uptake. Binds glycine betaine. The polypeptide is Glycine betaine-binding periplasmic protein OusX (Dickeya dadantii (strain 3937) (Erwinia chrysanthemi (strain 3937))).